The following is a 424-amino-acid chain: Histidinol dehydrogenase (424 aa).

Positions 121, 183, and 206 each coordinate NAD(+). Residues S229, Q251, and H254 each coordinate substrate. 2 residues coordinate Zn(2+): Q251 and H254. Catalysis depends on proton acceptor residues E319 and H320. H320, D353, E407, and H412 together coordinate substrate. Position 353 (D353) interacts with Zn(2+). Position 412 (H412) interacts with Zn(2+).

This sequence belongs to the histidinol dehydrogenase family. Requires Zn(2+) as cofactor.

It catalyses the reaction L-histidinol + 2 NAD(+) + H2O = L-histidine + 2 NADH + 3 H(+). The protein operates within amino-acid biosynthesis; L-histidine biosynthesis; L-histidine from 5-phospho-alpha-D-ribose 1-diphosphate: step 9/9. Catalyzes the sequential NAD-dependent oxidations of L-histidinol to L-histidinaldehyde and then to L-histidine. This is Histidinol dehydrogenase from Halalkalibacterium halodurans (strain ATCC BAA-125 / DSM 18197 / FERM 7344 / JCM 9153 / C-125) (Bacillus halodurans).